The sequence spans 325 residues: Protein ORANGE-ORANGE, chloroplastic (325 aa).

The transit peptide at 1 to 54 (MDRVLVASYPINHLIRPHSFRIDYCWSTCFTSRLNSGKERQKLSSRWRWRSMAS) directs the protein to the chloroplast. The segment covering 53 to 71 (ASDSTDSSSSSSFAPSVES) has biased composition (low complexity). The disordered stretch occupies residues 53–77 (ASDSTDSSSSSSFAPSVESDPSDKT). The next 2 membrane-spanning stretches (helical) occupy residues 164 to 184 (LYYV…GLLA) and 217 to 237 (IVAS…VVEV). The interval 226–317 (VGVISALMVV…CTGMAMASEH (92 aa)) is CR-type-like. One copy of the CXXCXGXG motif repeat lies at 248–255 (CKYCLGTG). A CXXCXXXG motif repeat occupies 259-266 (CARCSNTG). The stretch at 292–299 (CQNCSGSG) is one CXXCXGXG motif repeat. The CXXCXXXG motif repeat unit spans residues 303-310 (CPTCLCTG).

It belongs to the orange-like family.

The protein resides in the plastid. The protein localises to the chloroplast membrane. Functionally, triggers accumulation of carotenoids, mainly beta-carotene, in fruit flesh. The chain is Protein ORANGE-ORANGE, chloroplastic from Cucumis melo (Muskmelon).